The following is a 113-amino-acid chain: Large ribosomal subunit protein uL22 (113 aa).

It belongs to the universal ribosomal protein uL22 family. As to quaternary structure, part of the 50S ribosomal subunit.

Its function is as follows. This protein binds specifically to 23S rRNA; its binding is stimulated by other ribosomal proteins, e.g. L4, L17, and L20. It is important during the early stages of 50S assembly. It makes multiple contacts with different domains of the 23S rRNA in the assembled 50S subunit and ribosome. Functionally, the globular domain of the protein is located near the polypeptide exit tunnel on the outside of the subunit, while an extended beta-hairpin is found that lines the wall of the exit tunnel in the center of the 70S ribosome. The sequence is that of Large ribosomal subunit protein uL22 from Geobacillus sp. (strain WCH70).